We begin with the raw amino-acid sequence, 186 residues long: Sec-independent protein translocase protein TatB (186 aa).

The helical transmembrane segment at 1 to 21 (MFDIGFSELILLMVLGLVVLG) threads the bilayer. The disordered stretch occupies residues 120-186 (NAEKSQNAIS…SKSQSSKTKS (67 aa)). Residues 177-186 (SKSQSSKTKS) are compositionally biased toward polar residues.

Belongs to the TatB family. In terms of assembly, the Tat system comprises two distinct complexes: a TatABC complex, containing multiple copies of TatA, TatB and TatC subunits, and a separate TatA complex, containing only TatA subunits. Substrates initially bind to the TatABC complex, which probably triggers association of the separate TatA complex to form the active translocon.

It localises to the cell inner membrane. In terms of biological role, part of the twin-arginine translocation (Tat) system that transports large folded proteins containing a characteristic twin-arginine motif in their signal peptide across membranes. Together with TatC, TatB is part of a receptor directly interacting with Tat signal peptides. TatB may form an oligomeric binding site that transiently accommodates folded Tat precursor proteins before their translocation. The protein is Sec-independent protein translocase protein TatB of Haemophilus influenzae (strain ATCC 51907 / DSM 11121 / KW20 / Rd).